We begin with the raw amino-acid sequence, 283 residues long: MKRILIVTGQSGSGKSSALQVLEDLGYYCIDNLPLALLPEIVAKLDHENNLEQLALGVDVRSTRADMQEFDLVFEQLQKHGTVDVIYLTTQDQELIARFSASRRPHPLASRFKSLNECIQEEKQLLLPIQFRSTVHIDTTDKSVHDLKHTLLSKLGQSDKLILILQSFGYKHGIPLDADYVFDVRHLPNPHWDLELRRFSGLDEPVRRFLESSDQTNEMFDDIFHFLDKWLPVFAEGHRHYMTVSIGCTGGQHRSVYIVDRLKKALEAKWSIQVLHREMKHWS.

An ATP-binding site is contributed by 9 to 16 (GQSGSGKS). Residue 59–62 (DVRS) coordinates GTP.

The protein belongs to the RapZ-like family.

Functionally, displays ATPase and GTPase activities. This is Nucleotide-binding protein ACIAD3059 from Acinetobacter baylyi (strain ATCC 33305 / BD413 / ADP1).